The primary structure comprises 123 residues: Small ribosomal subunit protein uS13 (123 aa).

Positions proline 97–lysine 123 are disordered. Positions glutamine 101 to lysine 123 are enriched in basic residues.

Belongs to the universal ribosomal protein uS13 family. Part of the 30S ribosomal subunit. Forms a loose heterodimer with protein S19. Forms two bridges to the 50S subunit in the 70S ribosome.

Functionally, located at the top of the head of the 30S subunit, it contacts several helices of the 16S rRNA. In the 70S ribosome it contacts the 23S rRNA (bridge B1a) and protein L5 of the 50S subunit (bridge B1b), connecting the 2 subunits; these bridges are implicated in subunit movement. Contacts the tRNAs in the A and P-sites. This Alkaliphilus oremlandii (strain OhILAs) (Clostridium oremlandii (strain OhILAs)) protein is Small ribosomal subunit protein uS13.